The primary structure comprises 155 residues: Endoribonuclease YbeY (155 aa).

The Zn(2+) site is built by His114, His118, and His124.

This sequence belongs to the endoribonuclease YbeY family. It depends on Zn(2+) as a cofactor.

It is found in the cytoplasm. Single strand-specific metallo-endoribonuclease involved in late-stage 70S ribosome quality control and in maturation of the 3' terminus of the 16S rRNA. In Shigella flexneri serotype 5b (strain 8401), this protein is Endoribonuclease YbeY.